A 632-amino-acid chain; its full sequence is MLYHETFDVIVVGGGHAGTEAALASARTGQKTLLLTHNIDTLGQMSCNPAIGGIGKGHLVKEVDAMGGLMAQAIDHAGIQFRTLNASKGPAVRATRAQADRALYKAYVRDFLENAPNLTLFQQAVDDLIVEQDQVRGVITQMGLKFHAKAVVLTVGTFLGGKIHIGLQSSSGGRAGDPPSIALADRLRELPFRVDRLKTGTPPRIDARSVDFSVLEAQHGDNPTPVFSFMGDRTHHPRQIPCFITHTNEQTHEVIRNNLDRSPMYAGIIEGIGPRYCPSIEDKVMRFADKNSHQIFIEPEGLTTHELYPNGISTSLPFDVQVQIVRSMKGFENAHIVRPGYAIEYDFFDPRDLKQTYETKFIQGLFFAGQINGTTGYEEAAAQGLMAGLNASLFSQEKEGWSPRRDQAYMGVLIDDLSTMGTKEPYRMFTSRAEHRLLLREDNADLRLTEKARELGLVDDARWARFNQKIDNMEQERQRLKSTWMNPASTGIEELNQLLKSPMNREASGEDLLRRPEMTYEQLTSLAAFAPALDDLEAAEQVEIQVKYEGYIKRQQDEIEKSLRHEHTKLPADLDYSDVKGLSNEVVLKLNTAKPETLGIASRISGITPAAISILLVHLKKIGMLKVGEENA.

FAD-binding positions include 13–18, V125, and S180; that span reads GGGHAG. 273-287 is a binding site for NAD(+); it reads GPRYCPSIEDKVMRF. Q370 is a binding site for FAD.

Belongs to the MnmG family. Homodimer. Heterotetramer of two MnmE and two MnmG subunits. The cofactor is FAD.

It is found in the cytoplasm. In terms of biological role, NAD-binding protein involved in the addition of a carboxymethylaminomethyl (cmnm) group at the wobble position (U34) of certain tRNAs, forming tRNA-cmnm(5)s(2)U34. This Vibrio vulnificus (strain CMCP6) protein is tRNA uridine 5-carboxymethylaminomethyl modification enzyme MnmG.